A 286-amino-acid chain; its full sequence is Prepilin leader peptidase/N-methyltransferase (286 aa).

The chain crosses the membrane as a helical span at residues 11–31 (LGIFFVGLFSLMVGSFLNVVI). Positions 74, 77, 99, and 102 each coordinate Zn(2+). Helical transmembrane passes span 106-126 (ISAR…IVAF), 132-152 (LSLG…FIDA), 161-181 (LTLP…FINL), 185-205 (VIGA…FKLI), 231-251 (LPII…GIGL), and 257-277 (MPFG…GAQI).

This sequence belongs to the peptidase A24 family. Zn(2+) is required as a cofactor.

Its subcellular location is the cell inner membrane. The enzyme catalyses Typically cleaves a -Gly-|-Phe- bond to release an N-terminal, basic peptide of 5-8 residues from type IV prepilin, and then N-methylates the new N-terminal amino group, the methyl donor being S-adenosyl-L-methionine.. In terms of biological role, plays an essential role in type IV pili and type II pseudopili formation by proteolytically removing the leader sequence from substrate proteins and subsequently monomethylating the alpha-amino group of the newly exposed N-terminal phenylalanine. The sequence is that of Prepilin leader peptidase/N-methyltransferase (fimP) from Dichelobacter nodosus (Bacteroides nodosus).